We begin with the raw amino-acid sequence, 539 residues long: CTP synthase (539 aa).

Residues 1 to 267 (MTKYIFVTGG…DQKVVDFLHI (267 aa)) are amidoligase domain. Ser-13 contributes to the CTP binding site. Ser-13 contacts UTP. 14-19 (SLGKGI) lines the ATP pocket. Residue Tyr-54 participates in L-glutamine binding. Asp-71 provides a ligand contact to ATP. Mg(2+) is bound by residues Asp-71 and Glu-141. CTP contacts are provided by residues 148–150 (DME), 188–193 (KSKPTQ), and Lys-224. Residues 188–193 (KSKPTQ) and Lys-224 contribute to the UTP site. The Glutamine amidotransferase type-1 domain maps to 294-537 (KITLVGKYVE…IGAASGLQVD (244 aa)). Gly-356 contributes to the L-glutamine binding site. The active-site Nucleophile; for glutamine hydrolysis is the Cys-383. L-glutamine contacts are provided by residues 384–387 (LGMQ), Glu-407, and Arg-465. Catalysis depends on residues His-510 and Glu-512.

This sequence belongs to the CTP synthase family. In terms of assembly, homotetramer.

It catalyses the reaction UTP + L-glutamine + ATP + H2O = CTP + L-glutamate + ADP + phosphate + 2 H(+). The catalysed reaction is L-glutamine + H2O = L-glutamate + NH4(+). It carries out the reaction UTP + NH4(+) + ATP = CTP + ADP + phosphate + 2 H(+). It participates in pyrimidine metabolism; CTP biosynthesis via de novo pathway; CTP from UDP: step 2/2. With respect to regulation, allosterically activated by GTP, when glutamine is the substrate; GTP has no effect on the reaction when ammonia is the substrate. The allosteric effector GTP functions by stabilizing the protein conformation that binds the tetrahedral intermediate(s) formed during glutamine hydrolysis. Inhibited by the product CTP, via allosteric rather than competitive inhibition. Its function is as follows. Catalyzes the ATP-dependent amination of UTP to CTP with either L-glutamine or ammonia as the source of nitrogen. Regulates intracellular CTP levels through interactions with the four ribonucleotide triphosphates. This Lactobacillus delbrueckii subsp. bulgaricus (strain ATCC BAA-365 / Lb-18) protein is CTP synthase.